Consider the following 63-residue polypeptide: Large ribosomal subunit protein bL28 (63 aa).

The protein belongs to the bacterial ribosomal protein bL28 family.

This chain is Large ribosomal subunit protein bL28, found in Clostridium acetobutylicum (strain ATCC 824 / DSM 792 / JCM 1419 / IAM 19013 / LMG 5710 / NBRC 13948 / NRRL B-527 / VKM B-1787 / 2291 / W).